The chain runs to 442 residues: MQKAIPITAYKSSSLSGKIRIPGDKSISHRSLILGGLANGETYIHGLLESADVLNTASAMQAMGACIIKKDDFWIIRGTGNGCLLAAQKPLDFGNAGTGARLVMGMVGPYHMKTTFIGDASLSKRPMGRILDPLRLMGVEIEATHGDHLPLTLYGPKMANPIRYHVPIASSQVKSAILLAGLNTAGITTVIEPVLTRDHTEKMLKAFGATLEIERDKEGARLIHLYGHPHLTGQTIHIPGDPSSAAFLIIAALLVEDSDITIENVLINNSRIGLIETLWEMGAHIEFLNQRQTGGEDVADLRIKSSVLKGVTVPKERAPSMIDEYPALAVAAAFAEGKTVMLGIEELRVKESDRLSAVAQGLKINCVDCEEGQDFLVVYGKGSAKGLGGGYVSTHLDHRIAMCFLTFGLVSEKPVTIDDQRMIATSFPEFIPFIKQLGGKIA.

3-phosphoshikimate contacts are provided by Lys25, Ser26, and Arg30. Position 25 (Lys25) interacts with phosphoenolpyruvate. 2 residues coordinate phosphoenolpyruvate: Gly97 and Arg125. Residues Ser170, Ser171, Gln172, Asp323, and Lys350 each coordinate 3-phosphoshikimate. A phosphoenolpyruvate-binding site is contributed by Gln172. Asp323 (proton acceptor) is an active-site residue. Arg354 and Arg399 together coordinate phosphoenolpyruvate.

Belongs to the EPSP synthase family. In terms of assembly, monomer.

Its subcellular location is the cytoplasm. It carries out the reaction 3-phosphoshikimate + phosphoenolpyruvate = 5-O-(1-carboxyvinyl)-3-phosphoshikimate + phosphate. It functions in the pathway metabolic intermediate biosynthesis; chorismate biosynthesis; chorismate from D-erythrose 4-phosphate and phosphoenolpyruvate: step 6/7. Catalyzes the transfer of the enolpyruvyl moiety of phosphoenolpyruvate (PEP) to the 5-hydroxyl of shikimate-3-phosphate (S3P) to produce enolpyruvyl shikimate-3-phosphate and inorganic phosphate. This chain is 3-phosphoshikimate 1-carboxyvinyltransferase, found in Bartonella tribocorum (strain CIP 105476 / IBS 506).